The following is a 142-amino-acid chain: Peptide methionine sulfoxide reductase MsrB (142 aa).

One can recognise a MsrB domain in the interval 3 to 126 (KEKLKKKLSL…NSAALRFVPF (124 aa)). Catalysis depends on C115, which acts as the Nucleophile.

The protein belongs to the MsrB Met sulfoxide reductase family.

The catalysed reaction is L-methionyl-[protein] + [thioredoxin]-disulfide + H2O = L-methionyl-(R)-S-oxide-[protein] + [thioredoxin]-dithiol. In Lactococcus lactis subsp. lactis (strain IL1403) (Streptococcus lactis), this protein is Peptide methionine sulfoxide reductase MsrB.